Here is a 97-residue protein sequence, read N- to C-terminus: MEAPAERALPRLQALARPPPPISYEEELYDCLDYYYLRDFPACGAGRSKGRTRREQALRTNWPAPGGHERKVAQKLLNGQRKRRQRQLHPKMRTRLT.

The disordered stretch occupies residues 76–97; sequence LLNGQRKRRQRQLHPKMRTRLT. Basic residues predominate over residues 80–97; sequence QRKRRQRQLHPKMRTRLT.

The protein belongs to the NUPR family.

Its subcellular location is the nucleus. In terms of biological role, acts as a transcriptional repressor by inhibiting gene expression at the NUPR1 promoter in a p53/TP53-dependent manner in cancer cells. Involved in the G1 cell cycle arrest, and in a decrease in cell viability and cell proliferation. Plays a role as a negative regulator of the protumoral factor NUPR1. The chain is Nuclear protein 2 from Homo sapiens (Human).